The sequence spans 350 residues: S-adenosylmethionine:tRNA ribosyltransferase-isomerase (350 aa).

It belongs to the QueA family. In terms of assembly, monomer.

It is found in the cytoplasm. The catalysed reaction is 7-aminomethyl-7-carbaguanosine(34) in tRNA + S-adenosyl-L-methionine = epoxyqueuosine(34) in tRNA + adenine + L-methionine + 2 H(+). It participates in tRNA modification; tRNA-queuosine biosynthesis. In terms of biological role, transfers and isomerizes the ribose moiety from AdoMet to the 7-aminomethyl group of 7-deazaguanine (preQ1-tRNA) to give epoxyqueuosine (oQ-tRNA). This Aliivibrio fischeri (strain ATCC 700601 / ES114) (Vibrio fischeri) protein is S-adenosylmethionine:tRNA ribosyltransferase-isomerase.